Here is a 187-residue protein sequence, read N- to C-terminus: Putative adenylate kinase (187 aa).

ATP contacts are provided by Gly-10, Gly-12, Lys-13, Thr-14, and Val-15. An NMP region spans residues 30–53 (SLSQFVIENKLYTEYDELRQSYII). The segment at 103–113 (GRGWADIKVAE) is LID. Arg-104 provides a ligand contact to ATP.

The protein belongs to the adenylate kinase family. AK6 subfamily. In terms of assembly, interacts with uS11. Not a structural component of 40S pre-ribosomes, but transiently interacts with them by binding to uS11.

The enzyme catalyses AMP + ATP = 2 ADP. It catalyses the reaction ATP + H2O = ADP + phosphate + H(+). Broad-specificity nucleoside monophosphate (NMP) kinase that catalyzes the reversible transfer of the terminal phosphate group between nucleoside triphosphates and monophosphates. Also has ATPase activity. Involved in the late maturation steps of the 30S ribosomal particles, specifically 16S rRNA maturation. While NMP activity is not required for ribosome maturation, ATPase activity is. Associates transiently with small ribosomal subunit protein uS11. ATP hydrolysis breaks the interaction with uS11. May temporarily remove uS11 from the ribosome to enable a conformational change of the ribosomal RNA that is needed for the final maturation step of the small ribosomal subunit. This chain is Putative adenylate kinase, found in Saccharolobus islandicus (strain M.16.4 / Kamchatka #3) (Sulfolobus islandicus).